The following is a 771-amino-acid chain: Glucocorticoid receptor (771 aa).

The tract at residues 1-415 (MDLKESVTSS…STTTGPPPKL (415 aa)) is modulating. Thr-8 bears the Phosphothreonine mark. Arg-22 bears the Omega-N-methylarginine mark. 5 positions are modified to phosphoserine: Ser-44, Ser-133, Ser-199, Ser-207, and Ser-222. The segment covering 129-172 (SRSTSVPENPKNSASAVSGTPTEEFPKTQSDLSSEQENLKSQAG) has biased composition (polar residues). A disordered region spans residues 129–184 (SRSTSVPENPKNSASAVSGTPTEEFPKTQSDLSSEQENLKSQAGTNGGNVKFPPDQ). Lys-254 participates in a covalent cross-link: Glycyl lysine isopeptide (Lys-Gly) (interchain with G-Cter in SUMO2). Ser-263 carries the post-translational modification Phosphoserine. Residues Lys-273 and Lys-289 each participate in a glycyl lysine isopeptide (Lys-Gly) (interchain with G-Cter in SUMO); alternate cross-link. Residues Lys-273 and Lys-289 each participate in a glycyl lysine isopeptide (Lys-Gly) (interchain with G-Cter in SUMO2); alternate cross-link. Phosphoserine is present on residues Ser-303 and Ser-400. The disordered stretch occupies residues 390-411 (SSPGLRPDVSSPPSSSSTTTGP). Low complexity predominate over residues 400–409 (SPPSSSSTTT). A Glycyl lysine isopeptide (Lys-Gly) (interchain with G-Cter in ubiquitin) cross-link involves residue Lys-414. 2 NR C4-type zinc fingers span residues 416 to 436 (CLVC…CGSC) and 452 to 476 (CAGR…YRKC). Positions 416–481 (CLVCSDELSG…RYRKCLQAGM (66 aa)) form a DNA-binding region, nuclear receptor. Lys-475, Lys-487, Lys-489, and Lys-490 each carry N6-acetyllysine. The segment at 480-771 (GMNLQARKTK…DIKKLLFHQK (292 aa)) is interaction with CLOCK. The interval 482–517 (NLQARKTKKKIKGIQQATTGVSQNTSENPNKTIVPA) is hinge. The 235-residue stretch at 518-752 (TLPQLTPTLV…FPEMLAEIIT (235 aa)) folds into the NR LBD domain. Residues 526–691 (LVSLLEVIEP…EIRMTYIKEL (166 aa)) are interaction with CRY1. Lys-697 is covalently cross-linked (Glycyl lysine isopeptide (Lys-Gly) (interchain with G-Cter in SUMO)).

The protein belongs to the nuclear hormone receptor family. NR3 subfamily. Heteromultimeric cytoplasmic complex with HSP90AA1, HSPA1A/HSPA1B, and FKBP5 or another immunophilin such as PPID, STIP1, or the immunophilin homolog PPP5C. Upon ligand binding FKBP5 dissociates from the complex and FKBP4 takes its place, thereby linking the complex to dynein and mediating transport to the nucleus, where the complex dissociates. Probably forms a complex composed of chaperones HSP90 and HSP70, co-chaperones CDC37, PPP5C, TSC1 and client protein TSC2, CDK4, AKT, RAF1 and NR3C1; this complex does not contain co-chaperones STIP1/HOP and PTGES3/p23. Directly interacts with UNC45A. Binds to DNA as a homodimer, and as heterodimer with NR3C2 or the retinoid X receptor. Binds STAT5A and STAT5B homodimers and heterodimers. Interacts with NRIP1, POU2F1, POU2F2 and TRIM28. Interacts with several coactivator complexes, including the SMARCA4 complex, CREBBP/EP300, TADA2L (Ada complex) and p160 coactivators such as NCOA2 and NCOA6. Interaction with BAG1 inhibits transactivation. Interacts with HEXIM1 and TGFB1I1. Interacts with NCOA1. Interacts with NCOA3, SMARCA4, SMARCC1, SMARCD1, and SMARCE1. Interacts with CLOCK, CRY1 and CRY2 in a ligand-dependent fashion. Interacts with CIART. Interacts with RWDD3. Interacts with UBE2I/UBC9 and this interaction is enhanced in the presence of RWDD3. Interacts with GRIP1. Interacts with NR4A3 (via nuclear receptor DNA-binding domain), represses transcription activity of NR4A3 on the POMC promoter Nur response element (NurRE). Directly interacts with PNRC2 to attract and form a complex with UPF1 and DCP1A; the interaction leads to rapid mRNA degradation. Interacts with GSK3B. Interacts with FNIP1 and FNIP2. Interacts (via C-terminus) with HNRNPU (via C-terminus). Interacts with MCM3AP. Interacts (via domain NR LBD) with HSP90AA1 and HSP90AB1. In the absence of hormonal ligand, interacts with TACC1. Interacts (via NR LBD domain) with ZNF764 (via KRAB domain); the interaction regulates transcription factor activity of NR3C1 by directing its actions toward certain biologic pathways. In terms of processing, acetylation by CLOCK reduces its binding to glucocorticoid response elements and its transcriptional activity. Post-translationally, increased proteasome-mediated degradation in response to glucocorticoids. Phosphorylated in the absence of hormone; becomes hyperphosphorylated in the presence of glucocorticoid. The Ser-199, Ser-222 and Ser-400-phosphorylated forms are mainly cytoplasmic, and the Ser-207-phosphorylated form is nuclear. Phosphorylation at Ser-207 increases transcriptional activity. Phosphorylation at Ser-199, Ser-222 and Ser-400 decreases signaling capacity. Phosphorylation at Ser-400 may protect from glucocorticoid-induced apoptosis. Phosphorylation at Ser-199 and Ser-207 is not required in regulation of chromosome segregation. May be dephosphorylated by PPP5C, attenuates NR3C1 action. In terms of processing, ubiquitinated by UBR5, leading to its degradation: UBR5 specifically recognizes and binds ligand-bound NR3C1 when it is not associated with coactivators (NCOAs). In presence of NCOAs, the UBR5-degron is not accessible, preventing its ubiquitination and degradation. Post-translationally, sumoylation at Lys-273 and Lys-289 negatively regulates its transcriptional activity. Sumoylation at Lys-697 positively regulates its transcriptional activity in the presence of RWDD3. Sumoylation at Lys-273 and Lys-289 is dispensable whereas sumoylation at Lys-697 is critical for the stimulatory effect of RWDD3 on its transcriptional activity. Heat shock increases sumoylation in a RWDD3-dependent manner.

The protein localises to the cytoplasm. It localises to the nucleus. It is found in the mitochondrion. The protein resides in the cytoskeleton. Its subcellular location is the spindle. The protein localises to the microtubule organizing center. It localises to the centrosome. It is found in the chromosome. The protein resides in the nucleoplasm. Functionally, receptor for glucocorticoids (GC). Has a dual mode of action: as a transcription factor that binds to glucocorticoid response elements (GRE), both for nuclear and mitochondrial DNA, and as a modulator of other transcription factors. Affects inflammatory responses, cellular proliferation and differentiation in target tissues. Involved in chromatin remodeling. Plays a role in rapid mRNA degradation by binding to the 5' UTR of target mRNAs and interacting with PNRC2 in a ligand-dependent manner which recruits the RNA helicase UPF1 and the mRNA-decapping enzyme DCP1A, leading to RNA decay. Could act as a coactivator for STAT5-dependent transcription upon growth hormone (GH) stimulation and could reveal an essential role of hepatic GR in the control of body growth. Mediates glucocorticoid-induced apoptosis. Promotes accurate chromosome segregation during mitosis. May act as a tumor suppressor. May play a negative role in adipogenesis through the regulation of lipolytic and antilipogenic gene expression. The protein is Glucocorticoid receptor (NR3C1) of Cavia porcellus (Guinea pig).